We begin with the raw amino-acid sequence, 1088 residues long: RNA-directed RNA polymerase (1088 aa).

Positions 501-687 (LSYGDVTRFL…AKRYIAGGKI (187 aa)) constitute a RdRp catalytic domain.

Belongs to the reoviridae RNA-directed RNA polymerase family. As to quaternary structure, interacts with VP3 (Potential). Interacts with VP2; this interaction activates VP1. Interacts with NSP5; this interaction is probably necessary for the formation of functional virus factories. Interacts with NSP2; this interaction is weak. Mg(2+) serves as cofactor.

The protein localises to the virion. It catalyses the reaction RNA(n) + a ribonucleoside 5'-triphosphate = RNA(n+1) + diphosphate. Its function is as follows. RNA-directed RNA polymerase that is involved in both transcription and genome replication. Together with VP3 capping enzyme, forms an enzyme complex positioned near the channels situated at each of the five-fold vertices of the core. Following infection, the outermost layer of the virus is lost, leaving a double-layered particle (DLP) made up of the core and VP6 shell. VP1 then catalyzes the transcription of fully conservative plus-strand genomic RNAs that are extruded through the DLP's channels into the cytoplasm where they function as mRNAs for translation of viral proteins. One copy of each of the viral (+)RNAs is also recruited during core assembly, together with newly synthesized polymerase complexes and VP2. The polymerase of these novo-formed particles catalyzes the synthesis of complementary minus-strands leading to dsRNA formation. To do so, the polymerase specifically recognizes and binds 4 bases 5'-UGUG-3' in the conserved 3'-sequence of plus-strand RNA templates. VP2 presumably activates the autoinhibited VP1-RNA complex to coordinate packaging and genome replication. Once dsRNA synthesis is complete, the polymerase switches to the transcriptional mode, thus providing secondary transcription. This is RNA-directed RNA polymerase from Rotavirus A (strain RVA/Human/Philippines/L26/1987/G12P1B[4]) (RV-A).